The sequence spans 240 residues: MAALRRMLHLPRLTMGTCRPFAGSLADSCLADRCLWDRLHAQPRLGTVPTFDWFFGYEEVQGLLLPLLQEAQAASPLRVLDVGCGTSSLCTGLYTKSPHPVDVLGVDFSPVAVAHMNSLLEGGPGQTPLCPGHPASSLHFMHADARNLGAVASSGSFQLLLDKGTWDAVAQGGLPRAYQLLSECLRVLNPQGTLIQFSDEDPDVRLPCLEQGSRGWTVTVQELGPFRGITYFAYLIQGSH.

The transit peptide at 1–21 (MAALRRMLHLPRLTMGTCRPF) directs the protein to the mitochondrion.

The protein belongs to the methyltransferase superfamily.

It localises to the mitochondrion. It carries out the reaction L-lysyl-[citrate synthase] + S-adenosyl-L-methionine = N(6)-methyl-L-lysyl-[citrate synthase] + S-adenosyl-L-homocysteine + H(+). It catalyses the reaction N(6)-methyl-L-lysyl-[citrate synthase] + S-adenosyl-L-methionine = N(6),N(6)-dimethyl-L-lysyl-[citrate synthase] + S-adenosyl-L-homocysteine + H(+). The enzyme catalyses N(6),N(6)-dimethyl-L-lysyl-[citrate synthase] + S-adenosyl-L-methionine = N(6),N(6),N(6)-trimethyl-L-lysyl-[citrate synthase] + S-adenosyl-L-homocysteine + H(+). With respect to regulation, citrate synthase-lysine methyltransferase activity is inhibited by S-adenosylhomocysteine (AdoHcy) and oxaloacetate (OAA). Its function is as follows. Protein-lysine methyltransferase that selectively trimethylates citrate synthase (CS) in mitochondria. Seems to conduct trimethylation in a highly distributive manner rather than in a processive manner, and thus introduces a single methyl group per binding event. This is Citrate synthase-lysine N-methyltransferase CSKMT, mitochondrial from Pongo abelii (Sumatran orangutan).